The sequence spans 288 residues: Cyclin-dependent kinase 2 homolog (288 aa).

The 281-residue stretch at 4–284 (YHGLEKIGEG…AKQAIEHPYF (281 aa)) folds into the Protein kinase domain. Residues 10–18 (IGEGTYGVV) and lysine 32 contribute to the ATP site. Threonine 14 carries the post-translational modification Phosphothreonine. At tyrosine 15 the chain carries Phosphotyrosine. Residue aspartate 125 is the Proton acceptor of the active site. Position 158 is a phosphothreonine (threonine 158).

It belongs to the protein kinase superfamily. CMGC Ser/Thr protein kinase family. CDC2/CDKX subfamily. In terms of assembly, may form a complex composed of at least the catalytic subunit CRK2 and a cyclin. Requires Mg(2+) as cofactor.

It localises to the cytoplasm. It carries out the reaction L-seryl-[protein] + ATP = O-phospho-L-seryl-[protein] + ADP + H(+). The catalysed reaction is L-threonyl-[protein] + ATP = O-phospho-L-threonyl-[protein] + ADP + H(+). The enzyme catalyses [DNA-directed RNA polymerase] + ATP = phospho-[DNA-directed RNA polymerase] + ADP + H(+). Its activity is regulated as follows. Phosphorylation at Thr-14 or Tyr-15 inactivates the enzyme, while phosphorylation at Thr-158 activates it. Its function is as follows. Serine/threonine-protein kinase. Involved in the control of the cell cycle. Required for entry into S-phase and mitosis. Probable component of the kinase complex that phosphorylates the repetitive C-terminus of RNA polymerase II. The protein is Cyclin-dependent kinase 2 homolog of Plasmodium berghei (strain Anka).